The following is an 825-amino-acid chain: ATP-dependent RNA helicase DBP4 (825 aa).

Residues 1 to 34 (MAAGNAKGGFAHRNKSVPKKTDAKSLKRKRGQED) form a disordered region. A compositionally biased stretch (basic and acidic residues) spans 19 to 34 (KKTDAKSLKRKRGQED). The Q motif motif lies at 53 to 81 (KQFTDLPLCEATASGLRASHFEVLTDVQR). Residues 84-258 (IPLALKGRDI…RLSLKEPEYV (175 aa)) form the Helicase ATP-binding domain. 97 to 104 (AKTGSGKT) serves as a coordination point for ATP. A DEAD box motif is present at residues 206 to 209 (DEAD). Positions 284 to 439 (KLDTLFGFLR…NKKKSIKNEL (156 aa)) constitute a Helicase C-terminal domain. Disordered regions lie at residues 508 to 536 (NASR…KQVR) and 676 to 825 (AESE…LLED). Composition is skewed to basic and acidic residues over residues 677 to 691 (ESEK…DKQA) and 700 to 714 (RERQ…ELER). Composition is skewed to acidic residues over residues 730-739 (GEGDEGDEDP), 761-770 (GEDEGDDGEV), and 805-816 (MAEEPENLEDLE).

Belongs to the DEAD box helicase family. DDX10/DBP4 subfamily. As to quaternary structure, interacts with the U3 and U14 snoRNAs. Associates with pre-ribosomal complexes.

The protein localises to the nucleus. It is found in the nucleolus. The catalysed reaction is ATP + H2O = ADP + phosphate + H(+). Functionally, ATP-dependent RNA helicase required for ribosome biogenesis. Involved in the release of U14 snoRNA in pre-ribosomal complexes. Required for pre-rRNA cleavage at site A2. The chain is ATP-dependent RNA helicase DBP4 (DBP4) from Chaetomium globosum (strain ATCC 6205 / CBS 148.51 / DSM 1962 / NBRC 6347 / NRRL 1970) (Soil fungus).